The chain runs to 693 residues: MSDRKYPLERVRNIGIIAHIDAGKTTTTERILYLTKRTHKIGNIDDGTTVMDWMEQEKARGITITSVATSAYWNGHHLNVIDTPGHVDFTVEVERSLRVLDGGVVVFDGVAGVEAQSETVWRQASRYGVPRICFINKMDRTGANYERTLGMITQRLKAKCLPLQIPIGCAETFRGSCDLLDFQCYGMDNSPEEPAETFDLPDADKERAVKFRNTMIERLAEEDDEVMEAYLAGEELPVEKLKAAIRRVCLANKAIPIFCGTSLRNKGVKRLLDAVCDYLPSPVDIPAIKGTAPKTGEPMERHASDTEPFSALAFKIVSDPFVGRLVYFRIYSGNVSAGSGVYNSTRGERERIGRLIRMHANDREEIEYADAGEIVASLGLRNTFTGDTLCDQSAPILLESIKFPEPVINLAIEPKTRSDQDKMTEGLQKLAEEDPTFKVKFDDETGQTVIYGMGELHLDVLVSRLLSEFKVNASVGKPRVAYREAITAHAKAQGKFVRQSGGRGQYGDVTIEVEPRERGAGYEFVDNVKGGAVPRNFLMAAEAGIRETLETGVYAGYPMVDVKVTAVDGSYHDVDSNENAFKMAGSMAIKAAVAKAKPILLEPIMKLEAVTPEEYMGDVIGDFNSRRGQIISVEPNPETTVITGNVPLAESFGYTTDLRSVTKGRATFSMEFESYREMPGELANQVVEAAGKK.

Residues Glu-9–Val-283 form the tr-type G domain. Residues Ala-18 to Thr-25, Asp-82 to His-86, and Asn-136 to Asp-139 each bind GTP.

It belongs to the TRAFAC class translation factor GTPase superfamily. Classic translation factor GTPase family. EF-G/EF-2 subfamily.

It is found in the cytoplasm. In terms of biological role, catalyzes the GTP-dependent ribosomal translocation step during translation elongation. During this step, the ribosome changes from the pre-translocational (PRE) to the post-translocational (POST) state as the newly formed A-site-bound peptidyl-tRNA and P-site-bound deacylated tRNA move to the P and E sites, respectively. Catalyzes the coordinated movement of the two tRNA molecules, the mRNA and conformational changes in the ribosome. This chain is Elongation factor G, found in Dehalococcoides mccartyi (strain ATCC BAA-2266 / KCTC 15142 / 195) (Dehalococcoides ethenogenes (strain 195)).